The following is an 843-amino-acid chain: Protein P (843 aa).

Positions 1 to 177 (MPLSYQHFRK…FCGSPYSWEQ (177 aa)) are terminal protein domain (TP). The segment at 178–346 (ELQHGRLVFQ…YCLTHIVNLL (169 aa)) is spacer. Disordered stretches follow at residues 220–273 (QSRL…SSTS) and 289–316 (LSTS…RSQS). Over residues 289 to 299 (LSTSKRQSSSG) the composition is skewed to polar residues. The segment at 347-690 (EDWGPCTEHG…YLNLYPVARQ (344 aa)) is polymerase/reverse transcriptase domain (RT). A Reverse transcriptase domain is found at 357-600 (EHNIRIPRTP…YSLNFMGYVI (244 aa)). The Mg(2+) site is built by aspartate 429, aspartate 551, and aspartate 552.

The protein belongs to the hepadnaviridae P protein family.

The catalysed reaction is DNA(n) + a 2'-deoxyribonucleoside 5'-triphosphate = DNA(n+1) + diphosphate. It carries out the reaction Endonucleolytic cleavage to 5'-phosphomonoester.. With respect to regulation, activated by host HSP70 and HSP40 in vitro to be able to bind the epsilon loop of the pgRNA. Because deletion of the RNase H region renders the protein partly chaperone-independent, the chaperones may be needed indirectly to relieve occlusion of the RNA-binding site by this domain. Inhibited by several reverse-transcriptase inhibitors: Lamivudine, Adefovir and Entecavir. Its function is as follows. Multifunctional enzyme that converts the viral RNA genome into dsDNA in viral cytoplasmic capsids. This enzyme displays a DNA polymerase activity that can copy either DNA or RNA templates, and a ribonuclease H (RNase H) activity that cleaves the RNA strand of RNA-DNA heteroduplexes in a partially processive 3'- to 5'-endonucleasic mode. Neo-synthesized pregenomic RNA (pgRNA) are encapsidated together with the P protein, and reverse-transcribed inside the nucleocapsid. Initiation of reverse-transcription occurs first by binding the epsilon loop on the pgRNA genome, and is initiated by protein priming, thereby the 5'-end of (-)DNA is covalently linked to P protein. Partial (+)DNA is synthesized from the (-)DNA template and generates the relaxed circular DNA (RC-DNA) genome. After budding and infection, the RC-DNA migrates in the nucleus, and is converted into a plasmid-like covalently closed circular DNA (cccDNA). The activity of P protein does not seem to be necessary for cccDNA generation, and is presumably released from (+)DNA by host nuclear DNA repair machinery. The chain is Protein P from Hepatitis B virus genotype C subtype ad (isolate Japan/S-179/1988) (HBV-C).